A 271-amino-acid polypeptide reads, in one-letter code: Solute carrier family 66 member 2 (271 aa).

Helical transmembrane passes span 8-28 (WLLVPLHQLVSWGAAAAMVFG), 49-69 (FSTYVCLVLLVANILRILFWF), and 76-96 (PLLWQSAIMILTMLLMLKLCT). The region spanning 14-80 (HQLVSWGAAA…RRFESPLLWQ (67 aa)) is the PQ-loop 1 domain. At Ser-110 the chain carries Phosphoserine. The next 3 membrane-spanning stretches (helical) occupy residues 145 to 165 (DYVQCVLAFTGVAGYITYLSI), 168 to 188 (ALFVETLGFLAVLTEAMLGVP), and 232 to 252 (VCGLLQVLVDLAILGQAYAFA). The region spanning 178–233 (AVLTEAMLGVPQLYRNHRHQSTEGMSIKMVLMWTSGDAFKTAYFLLKGAPLQFSVC) is the PQ-loop 2 domain.

It localises to the membrane. The chain is Solute carrier family 66 member 2 from Homo sapiens (Human).